The primary structure comprises 75 residues: Protein EGO2 (75 aa).

This chain is Protein EGO2, found in Saccharomyces cerevisiae (strain ATCC 204508 / S288c) (Baker's yeast).